Here is a 269-residue protein sequence, read N- to C-terminus: uncharacterized protein (269 aa).

Positions 3 to 105 (WIINDNIEFW…VPRRGFKIHN (103 aa)) form a DNA-binding region, ompR/PhoB-type.

To V.cholerae cholera toxin transcriptional activator (ToxR).

This is an uncharacterized protein from Escherichia coli (strain K12).